We begin with the raw amino-acid sequence, 330 residues long: Aspartate--ammonia ligase (330 aa).

The protein belongs to the class-II aminoacyl-tRNA synthetase family. AsnA subfamily.

It is found in the cytoplasm. The enzyme catalyses L-aspartate + NH4(+) + ATP = L-asparagine + AMP + diphosphate + H(+). The protein operates within amino-acid biosynthesis; L-asparagine biosynthesis; L-asparagine from L-aspartate (ammonia route): step 1/1. This chain is Aspartate--ammonia ligase, found in Shigella boydii serotype 18 (strain CDC 3083-94 / BS512).